Here is a 217-residue protein sequence, read N- to C-terminus: MSNPFLKQVFNKDKTFRPKRKFEPGTQRFELHKKAQASLNAGLDLRLAVQLPPGEDLNDWVAVHVVDFFNRVNLIYGTISDGCTEQSCPVMSGGPKYEYRWQDEHKFRKPTALSAPRYMDLLMDWIEAQINNEDLFPTNVGTPFPKNFLQTVRKILSRLFRVFVHVYIHHFDRIAQMGSEAHVNTCYKHFYYFVKEFGLIDTKELEPLKEMTARMCH.

Residues cysteine 83, cysteine 88, histidine 165, and histidine 170 each coordinate Zn(2+).

This sequence belongs to the MOB1/phocein family.

May regulate the activity of kinases. This chain is MOB kinase activator 3A (MOB3A), found in Homo sapiens (Human).